The chain runs to 562 residues: Probable ganciclovir kinase (562 aa).

The span at 1–16 (MDNGVETPQGQKTQPI) shows a compositional bias: polar residues. Residues 1-32 (MDNGVETPQGQKTQPINLPPVRKKLRKHEGLG) are disordered. ATP is bound by residues 201–209 (LGVGAYGKV) and Lys218. The active-site Proton acceptor is the Asp313.

The protein belongs to the protein kinase superfamily. Tyr protein kinase family. HCMV ganciclovir subfamily.

Functionally, phosphorylates the antiviral nucleoside analog ganciclovir. The chain is Probable ganciclovir kinase (U69) from Homo sapiens (Human).